The chain runs to 272 residues: NADPH-dependent 7-cyano-7-deazaguanine reductase (272 aa).

Residue 80–82 (VES) participates in substrate binding. 82–83 (SK) is an NADPH binding site. Catalysis depends on Cys-178, which acts as the Thioimide intermediate. Asp-185 acts as the Proton donor in catalysis. 217–218 (AE) serves as a coordination point for substrate. 246–247 (RG) is a binding site for NADPH.

It belongs to the GTP cyclohydrolase I family. QueF type 2 subfamily. Homodimer.

It localises to the cytoplasm. It catalyses the reaction 7-aminomethyl-7-carbaguanine + 2 NADP(+) = 7-cyano-7-deazaguanine + 2 NADPH + 3 H(+). Its pathway is tRNA modification; tRNA-queuosine biosynthesis. Functionally, catalyzes the NADPH-dependent reduction of 7-cyano-7-deazaguanine (preQ0) to 7-aminomethyl-7-deazaguanine (preQ1). This Rickettsia typhi (strain ATCC VR-144 / Wilmington) protein is NADPH-dependent 7-cyano-7-deazaguanine reductase.